Consider the following 490-residue polypeptide: Adenylosuccinate synthetase, chloroplastic (490 aa).

The N-terminal 45 residues, 1–45 (MSLSSLTLDSNPRFAVGGPYHRRYPPLHHPRSFVSCSAKRPAVSA), are a transit peptide targeting the chloroplast. S46 carries the post-translational modification N-acetylserine. GTP-binding positions include 77-83 (GDEGKGK) and 105-107 (GHT). The Proton acceptor role is filled by D78. Mg(2+) contacts are provided by D78 and G105. IMP-binding positions include 78 to 81 (DEGK), 103 to 106 (NAGH), T195, R209, Q289, T304, and R368. The active-site Proton donor is H106. Position 364-370 (364-370 (TTTGRPR)) interacts with substrate. GTP contacts are provided by residues R370, 396 to 398 (KLD), and 479 to 481 (GIG).

The protein belongs to the adenylosuccinate synthetase family. As to quaternary structure, homodimer. Mg(2+) is required as a cofactor.

The protein localises to the plastid. It localises to the chloroplast. It catalyses the reaction IMP + L-aspartate + GTP = N(6)-(1,2-dicarboxyethyl)-AMP + GDP + phosphate + 2 H(+). The protein operates within purine metabolism; AMP biosynthesis via de novo pathway; AMP from IMP: step 1/2. Its function is as follows. Plays an important role in the de novo pathway and in the salvage pathway of purine nucleotide biosynthesis. Catalyzes the first committed step in the biosynthesis of AMP from IMP. The chain is Adenylosuccinate synthetase, chloroplastic from Arabidopsis thaliana (Mouse-ear cress).